The primary structure comprises 120 residues: Superoxide dismutase [Cu-Zn] (120 aa).

Residues His11, His13, and His28 each contribute to the Cu cation site. Positions 16–52 (GDTTNGCMSTGPHFNPTGKEHGAPQDENRHAGDLGNI) are disordered. Cys22 and Cys112 are joined by a disulfide. 4 residues coordinate Zn(2+): His28, His36, His45, and Asp48. Basic and acidic residues predominate over residues 33-47 (GKEHGAPQDENRHAG). His85 serves as a coordination point for Cu cation.

It belongs to the Cu-Zn superoxide dismutase family. As to quaternary structure, homodimer. The cofactor is Cu cation. Zn(2+) is required as a cofactor.

It is found in the cytoplasm. The enzyme catalyses 2 superoxide + 2 H(+) = H2O2 + O2. In terms of biological role, destroys radicals which are normally produced within the cells and which are toxic to biological systems. The protein is Superoxide dismutase [Cu-Zn] (sodC) of Aspergillus japonicus.